The chain runs to 398 residues: Acetate kinase (398 aa).

A Mg(2+)-binding site is contributed by N7. K14 contacts ATP. Substrate is bound at residue R91. The Proton donor/acceptor role is filled by D148. ATP contacts are provided by residues 208-212 (HLGNG), 283-285 (DFR), and 331-335 (GIGEH). E386 is a binding site for Mg(2+).

It belongs to the acetokinase family. As to quaternary structure, homodimer. Mg(2+) serves as cofactor. Requires Mn(2+) as cofactor.

Its subcellular location is the cytoplasm. It carries out the reaction acetate + ATP = acetyl phosphate + ADP. It functions in the pathway metabolic intermediate biosynthesis; acetyl-CoA biosynthesis; acetyl-CoA from acetate: step 1/2. In terms of biological role, catalyzes the formation of acetyl phosphate from acetate and ATP. Can also catalyze the reverse reaction. The protein is Acetate kinase of Clostridium botulinum (strain Alaska E43 / Type E3).